Here is a 228-residue protein sequence, read N- to C-terminus: Peptide deformylase (228 aa).

2 disordered regions span residues 1–28 (MSQDRRYTGCNTHSNTHSAQDREKEGAV) and 116–138 (GVPKRQTNKQQANNSTSCDEPDR). Composition is skewed to polar residues over residues 8-18 (TGCNTHSNTHS) and 123-133 (NKQQANNSTSC). Fe cation is bound by residues Cys141 and His183. The active site involves Glu184. His187 contributes to the Fe cation binding site.

This sequence belongs to the polypeptide deformylase family. It depends on Fe(2+) as a cofactor.

The catalysed reaction is N-terminal N-formyl-L-methionyl-[peptide] + H2O = N-terminal L-methionyl-[peptide] + formate. Functionally, removes the formyl group from the N-terminal Met of newly synthesized proteins. Requires at least a dipeptide for an efficient rate of reaction. N-terminal L-methionine is a prerequisite for activity but the enzyme has broad specificity at other positions. This is Peptide deformylase from Tropheryma whipplei (strain Twist) (Whipple's bacillus).